A 288-amino-acid chain; its full sequence is MAYCNSKTDLSRVPLLALNMGFRKKVGLYLNPRNAVAADWMALAEALGFTFLEIKNYESAINPTVKVLEDWQARSTDATVGKLLSILSEVERNDVLEDLQPMIDEDVRRYCERLNRDPEPPVQVNQVDSCFHRTLERVGLTLHDDPEGTPELFDAFICYCQRDFEFVQEMIRQLEETDFKLKLCVFDRDVLPGSCVWTITSELIEKRCKRMVVVISDEYLDSEACDFQTKFALSLSPGARNKRLIPVKYKSMSKPFPSILRFLTLCDYTRPCTQAWFWKRLAKALSLP.

One can recognise a Death domain in the interval 25 to 103 (KVGLYLNPRN…DVLEDLQPMI (79 aa)). Residues 104–148 (DEDVRRYCERLNRDPEPPVQVNQVDSCFHRTLERVGLTLHDDPEG) are intermediate domain. A TIR domain is found at 151–285 (ELFDAFICYC…WFWKRLAKAL (135 aa)).

Its subcellular location is the cytoplasm. Its function is as follows. Adapter protein involved in the Toll-like receptor and IL-1 receptor signaling pathway in the innate immune response. The polypeptide is Myeloid differentiation primary response protein MyD88 (myd88) (Takifugu rubripes (Japanese pufferfish)).